A 253-amino-acid chain; its full sequence is Snake venom serine protease homolog HS120 (253 aa).

The N-terminal stretch at 1–18 is a signal peptide; that stretch reads MVLIRVIANLLILQLSYA. Positions 19 to 24 are excised as a propeptide; sequence QKSSEL. Positions 25 to 244 constitute a Peptidase S1 domain; sequence VIGGDECNIN…YLPWIQSIIA (220 aa). 6 disulfides stabilise this stretch: C31-C158, C49-C65, C98-C251, C137-C205, C169-C184, and C195-C220. Residues N116 and N165 are each glycosylated (N-linked (GlcNAc...) asparagine).

It belongs to the peptidase S1 family. Snake venom subfamily. As to expression, expressed by the venom gland.

The protein resides in the secreted. Functionally, snake venom serine protease homolog that may act in the hemostasis system of the prey. The chain is Snake venom serine protease homolog HS120 from Bothrops jararaca (Jararaca).